Reading from the N-terminus, the 107-residue chain is CLAVATA3/ESR (CLE)-related protein 10 (107 aa).

The first 23 residues, 1–23, serve as a signal peptide directing secretion; sequence MKTNRNRPINILIVFFLLTTARA. Asn27 and Asn30 each carry an N-linked (GlcNAc...) asparagine glycan. Residues 73-107 form a disordered region; sequence SRQPLFSPPPPPTEIDQRYGVEKRLVPSGPNPLHN. Residues 87-97 show a composition bias toward basic and acidic residues; the sequence is IDQRYGVEKRL. Hydroxyproline is present on residues Pro99 and Pro102. A glycan (O-linked (Ara...) hydroxyproline) is linked at Pro102.

The protein belongs to the CLV3/ESR signal peptide family. The O-glycosylation (arabinosylation) of the hydroxyproline Pro-102 enhances binding affinity of the CLE10p peptide for its receptor. Expressed in stems, apex, leaves, flowers, siliques and pollen.

It is found in the secreted. The protein resides in the extracellular space. Functionally, extracellular signal peptide that regulates cell fate. Represses root apical meristem maintenance. Regulates the transition of protophloem cells from proliferation to differentiation, thus impinging on postembryonic growth capacity of the root meristem; this signaling pathway requires CRN and CLV2. This chain is CLAVATA3/ESR (CLE)-related protein 10, found in Arabidopsis thaliana (Mouse-ear cress).